Reading from the N-terminus, the 351-residue chain is DNA polymerase IV (351 aa).

A UmuC domain is found at 4 to 185; that stretch reads IIHVDMDCFF…LPLAKIPGVG (182 aa). Residues Asp8 and Asp103 each coordinate Mg(2+). Glu104 is a catalytic residue.

Belongs to the DNA polymerase type-Y family. In terms of assembly, monomer. Requires Mg(2+) as cofactor.

The protein localises to the cytoplasm. It carries out the reaction DNA(n) + a 2'-deoxyribonucleoside 5'-triphosphate = DNA(n+1) + diphosphate. Functionally, poorly processive, error-prone DNA polymerase involved in untargeted mutagenesis. Copies undamaged DNA at stalled replication forks, which arise in vivo from mismatched or misaligned primer ends. These misaligned primers can be extended by PolIV. Exhibits no 3'-5' exonuclease (proofreading) activity. May be involved in translesional synthesis, in conjunction with the beta clamp from PolIII. This chain is DNA polymerase IV, found in Escherichia coli O1:K1 / APEC.